The primary structure comprises 270 residues: 4-hydroxy-tetrahydrodipicolinate reductase (270 aa).

NAD(+)-binding positions include 11–16 and Glu37; that span reads GAGGRM. NADP(+) is bound at residue Arg38. Residues 101-103 and 125-128 each bind NAD(+); these read GTT and APNM. His158 serves as the catalytic Proton donor/acceptor. His159 provides a ligand contact to (S)-2,3,4,5-tetrahydrodipicolinate. Residue Lys162 is the Proton donor of the active site. 168–169 serves as a coordination point for (S)-2,3,4,5-tetrahydrodipicolinate; the sequence is GT.

The protein belongs to the DapB family.

It localises to the cytoplasm. The enzyme catalyses (S)-2,3,4,5-tetrahydrodipicolinate + NAD(+) + H2O = (2S,4S)-4-hydroxy-2,3,4,5-tetrahydrodipicolinate + NADH + H(+). It carries out the reaction (S)-2,3,4,5-tetrahydrodipicolinate + NADP(+) + H2O = (2S,4S)-4-hydroxy-2,3,4,5-tetrahydrodipicolinate + NADPH + H(+). Its pathway is amino-acid biosynthesis; L-lysine biosynthesis via DAP pathway; (S)-tetrahydrodipicolinate from L-aspartate: step 4/4. Catalyzes the conversion of 4-hydroxy-tetrahydrodipicolinate (HTPA) to tetrahydrodipicolinate. This is 4-hydroxy-tetrahydrodipicolinate reductase from Shewanella sp. (strain ANA-3).